Reading from the N-terminus, the 325-residue chain is Biotin synthase (325 aa).

The 230-residue stretch at 51–280 folds into the Radical SAM core domain; sequence FMGRKADLCT…NVYIRYAGGR (230 aa). C69, C73, and C76 together coordinate [4Fe-4S] cluster. Residues S113, C145, C205, and R275 each contribute to the [2Fe-2S] cluster site.

Belongs to the radical SAM superfamily. Biotin synthase family. As to quaternary structure, homodimer. [4Fe-4S] cluster serves as cofactor. Requires [2Fe-2S] cluster as cofactor.

The enzyme catalyses (4R,5S)-dethiobiotin + (sulfur carrier)-SH + 2 reduced [2Fe-2S]-[ferredoxin] + 2 S-adenosyl-L-methionine = (sulfur carrier)-H + biotin + 2 5'-deoxyadenosine + 2 L-methionine + 2 oxidized [2Fe-2S]-[ferredoxin]. It functions in the pathway cofactor biosynthesis; biotin biosynthesis; biotin from 7,8-diaminononanoate: step 2/2. Catalyzes the conversion of dethiobiotin (DTB) to biotin by the insertion of a sulfur atom into dethiobiotin via a radical-based mechanism. The chain is Biotin synthase from Clostridioides difficile (strain 630) (Peptoclostridium difficile).